Consider the following 346-residue polypeptide: Cysteinyl leukotriene receptor 2 (346 aa).

Over 1–42 the chain is Extracellular; sequence MERKFMSLQPSISVSEMEPNGTFSNNNSRNCTIENFKREFFP. N-linked (GlcNAc...) asparagine glycans are attached at residues asparagine 20, asparagine 26, and asparagine 30. The chain crosses the membrane as a helical span at residues 43-63; it reads IVYLIIFFWGVLGNGLSIYVF. Over 64–72 the chain is Cytoplasmic; it reads LQPYKKSTS. A helical membrane pass occupies residues 73 to 93; it reads VNVFMLNLAISDLLFISTLPF. At 94 to 123 the chain is on the extracellular side; sequence RADYYLRGSNWIFGDLACRIMSYSLYVNMY. A disulfide bond links cysteine 111 and cysteine 187. A helical transmembrane segment spans residues 124 to 144; the sequence is SSIYFLTVLSVVRFLAMVHPF. Residues 145–153 lie on the Cytoplasmic side of the membrane; it reads RLLHVTSIR. Residues 154–174 traverse the membrane as a helical segment; the sequence is SAWILCGIIWILIMASSIMLL. The Extracellular segment spans residues 175 to 204; the sequence is DSGSEQNGSVTSCLELNLYKIAKLQTMNYI. Asparagine 181 carries an N-linked (GlcNAc...) asparagine glycan. The helical transmembrane segment at 205–225 threads the bilayer; the sequence is ALVVGCLLPFFTLSICYLLII. The Cytoplasmic segment spans residues 226 to 245; it reads RVLLKVEVPESGLRVSHRKA. A helical membrane pass occupies residues 246 to 266; that stretch reads LTTIIITLIIFFLCFLPYHTL. Topologically, residues 267-286 are extracellular; that stretch reads RTVHLTTWKVGLCKDRLHKA. Residues 287–307 form a helical membrane-spanning segment; it reads LVITLALAAANACFNPLLYYF. The Cytoplasmic portion of the chain corresponds to 308–346; the sequence is AGENFKDRLKSALRKGHPQKAKTKCVFPVSVWLRKETRV.

It belongs to the G-protein coupled receptor 1 family. As to expression, widely expressed, with highest levels in the heart, placenta, spleen, peripheral blood leukocytes and adrenal gland. In lung, expressed in the interstitial macrophages, and slightly in smooth muscle cells.

The protein resides in the cell membrane. Its function is as follows. Receptor for cysteinyl leukotrienes. The response is mediated via a G-protein that activates a phosphatidylinositol-calcium second messenger system. Stimulation by BAY u9773, a partial agonist, induces specific contractions of pulmonary veins and might also have an indirect role in the relaxation of the pulmonary vascular endothelium. The rank order of affinities for the leukotrienes is LTC4 = LTD4 &gt;&gt; LTE4. The protein is Cysteinyl leukotriene receptor 2 (CYSLTR2) of Homo sapiens (Human).